A 278-amino-acid polypeptide reads, in one-letter code: Undecaprenyl-diphosphatase 1 (278 aa).

Transmembrane regions (helical) follow at residues 46-66 (VVGF…VYFF), 91-111 (YTFT…GLAA), 119-139 (LASL…MWFA), 153-173 (SLPD…FPGF), 191-211 (VAAT…AGLY), 225-245 (PLAV…AWLL), and 256-276 (FIIY…GGAI).

Belongs to the UppP family.

It localises to the cell membrane. The catalysed reaction is di-trans,octa-cis-undecaprenyl diphosphate + H2O = di-trans,octa-cis-undecaprenyl phosphate + phosphate + H(+). Catalyzes the dephosphorylation of undecaprenyl diphosphate (UPP). Confers resistance to bacitracin. The protein is Undecaprenyl-diphosphatase 1 of Frankia alni (strain DSM 45986 / CECT 9034 / ACN14a).